The primary structure comprises 413 residues: Snake venom metalloproteinase AaPA (413 aa).

Positions 1-20 are cleaved as a signal peptide; that stretch reads MIQVLLVTICLAAFPYQGSS. A propeptide spanning residues 21–189 is cleaved from the precursor; the sequence is IILESGKVND…KKASQLIVST (169 aa). The Peptidase M12B domain occupies 193 to 390; it reads RYMEIVIVVD…ENPPCILNKP (198 aa). Ca(2+) contacts are provided by Glu196 and Asp280. Cystine bridges form between Cys304–Cys385, Cys344–Cys369, and Cys346–Cys352. Residue His329 participates in Zn(2+) binding. Glu330 is a catalytic residue. Zn(2+) is bound by residues His333 and His339. Positions 385, 388, 400, 403, 405, 407, and 413 each coordinate Ca(2+). A propeptide spanning residues 391-413 is cleaved from the precursor; the sequence is LRTDTVSTPVSGNELLEAEKDYD.

Belongs to the venom metalloproteinase (M12B) family. P-I subfamily. In terms of assembly, monomer. Requires Zn(2+) as cofactor. In terms of tissue distribution, expressed by the venom gland.

Its subcellular location is the secreted. Snake venom zinc metalloprotease that may activate prothrombin. This is Snake venom metalloproteinase AaPA from Deinagkistrodon acutus (Hundred-pace snake).